Consider the following 442-residue polypeptide: UDP-N-acetylmuramoylalanine--D-glutamate ligase (442 aa).

109-115 is a binding site for ATP; it reads GSNGKTT.

The protein belongs to the MurCDEF family.

The protein resides in the cytoplasm. The enzyme catalyses UDP-N-acetyl-alpha-D-muramoyl-L-alanine + D-glutamate + ATP = UDP-N-acetyl-alpha-D-muramoyl-L-alanyl-D-glutamate + ADP + phosphate + H(+). Its pathway is cell wall biogenesis; peptidoglycan biosynthesis. In terms of biological role, cell wall formation. Catalyzes the addition of glutamate to the nucleotide precursor UDP-N-acetylmuramoyl-L-alanine (UMA). The polypeptide is UDP-N-acetylmuramoylalanine--D-glutamate ligase (Solibacter usitatus (strain Ellin6076)).